A 73-amino-acid polypeptide reads, in one-letter code: Large ribosomal subunit protein uL29 (73 aa).

The protein belongs to the universal ribosomal protein uL29 family.

This Saccharolobus solfataricus (strain ATCC 35092 / DSM 1617 / JCM 11322 / P2) (Sulfolobus solfataricus) protein is Large ribosomal subunit protein uL29 (rpl29).